The primary structure comprises 2035 residues: Proline-rich protein 12 (2035 aa).

Disordered regions lie at residues 210 to 280 (GGGV…ERAL), 292 to 311 (RPASAQPPPPPPPAHSLQHY), 329 to 584 (CSPL…GAPG), and 645 to 685 (QAPS…GTPY). The segment covering 223–240 (QTPPYRPGPPDPPPPPRH) has biased composition (pro residues). Residues 249–261 (ASSSAATAAEPSS) show a composition bias toward low complexity. The span at 296-305 (AQPPPPPPPA) shows a compositional bias: pro residues. Phosphoserine occurs at positions 330 and 338. Residues 338–364 (SPGAGEPSKGGPSGATAGAAGRATGPE) show a composition bias toward low complexity. The segment covering 365–377 (TAGGGAAGGGGGY) has biased composition (gly residues). Low complexity-rich tracts occupy residues 408–429 (STATPKCQSLGGPAAAYAAGKA) and 437–455 (SQAYSPGQPQGLLGPQAYG). The span at 476–487 (PPQPPSGPPPPG) shows a compositional bias: pro residues. Composition is skewed to polar residues over residues 490–501 (TCQSYSPDQLQG) and 520–534 (GLPTASPSLSYSTGH). The segment covering 540 to 555 (GHGGGWGPSSLGGGGE) has biased composition (gly residues). Phosphoserine is present on Ser-648. Positions 670-681 (GLGGSGGAGGAP) are enriched in gly residues. Position 735 is a phosphothreonine (Thr-735). Disordered stretches follow at residues 755–844 (AFLQ…PLQL), 851–870 (HGLEPTAPSPRLRPEESLEP), 879–920 (GALE…APRF), and 946–1061 (EMFG…CSTK). The span at 830–841 (PQPPPPPPPPMP) shows a compositional bias: pro residues. Position 859 is a phosphoserine (Ser-859). Pro residues predominate over residues 1031-1046 (SAPPPPPPPPPPPPVS). Phosphoserine is present on residues Ser-1070 and Ser-1128. 4 disordered regions span residues 1112-1244 (RRLP…DHNS), 1288-1355 (PLYQ…SPCK), 1367-1567 (TLPS…GEGI), and 1662-1839 (HRPP…PGRL). A compositionally biased stretch (basic residues) spans 1190-1199 (KPRGRGRGRG). Positions 1200 to 1214 (RKAEEMGGTRLEPLK) are enriched in basic and acidic residues. Lys-1214 carries the N6-acetyllysine modification. Thr-1295 carries the post-translational modification Phosphothreonine. Ser-1299 is modified (phosphoserine). A compositionally biased stretch (pro residues) spans 1314–1329 (QPPPPTVPTVPHPAPS). 3 positions are modified to phosphoserine: Ser-1372, Ser-1373, and Ser-1378. Residues 1449–1529 (PPTPPPAPTP…PPEEPPAPSP (81 aa)) are compositionally biased toward pro residues. The segment covering 1535–1547 (PDARPLHLAKKQE) has biased composition (basic and acidic residues). Residue Thr-1555 is modified to Phosphothreonine. Ser-1562 carries the phosphoserine modification. The segment covering 1698–1709 (ETPEKMTSEKPP) has biased composition (basic and acidic residues). Position 1699 is a phosphothreonine (Thr-1699). A compositionally biased stretch (pro residues) spans 1710–1730 (EPAPEPAVPEPPAPEKPSPPR). Residues 1731–1768 (PVEKEKEKEKEKEKEKERVTRPLRSERATSGRQMRTDR) show a composition bias toward basic and acidic residues. Over residues 1769 to 1779 (SLATGQSTTSR) the composition is skewed to polar residues. The span at 1817–1828 (SSSDSESSPGAP) shows a compositional bias: low complexity. Position 1924 is a phosphoserine (Ser-1924).

Expressed in brain.

The protein resides in the nucleus. Its subcellular location is the postsynaptic density. It localises to the synapse. It is found in the synaptosome. The sequence is that of Proline-rich protein 12 from Mus musculus (Mouse).